The sequence spans 166 residues: Large ribosomal subunit protein bL9 (166 aa).

Belongs to the bacterial ribosomal protein bL9 family.

Functionally, binds to the 23S rRNA. This chain is Large ribosomal subunit protein bL9, found in Borrelia garinii subsp. bavariensis (strain ATCC BAA-2496 / DSM 23469 / PBi) (Borreliella bavariensis).